Here is a 194-residue protein sequence, read N- to C-terminus: MKIKRIEVLINNGSVPGIPMILNEIQDAIKTVSWPEGNNSFVINPVRKGNGVKPIKNSCMRHLHQKGWALEHPVRIKAEMRPGPLDAVKMIGGKAFALEWETGNISSSHRAINKMVMGMLERVIIGGVLILPSRDMYNYLTDRVGNFRELEPYFSVWRQFNLKDAYLAIVEIEHDSVDAQVSLIPKGTDGRAIR.

Positions 71, 86, and 100 each coordinate Mg(2+). Glutamate 101 functions as the Proton acceptor in the catalytic mechanism.

In terms of assembly, homodimer. Mg(2+) serves as cofactor.

The catalysed reaction is Endonucleolytic cleavage of DNA to give specific double-stranded fragments with terminal 5'-phosphates.. Its function is as follows. A P subtype restriction enzyme that recognizes the double-stranded sequence 5'-GGATCC-3' and cleaves after G-1. This chain is Type II restriction enzyme OkrAI, found in Oceanobacter kriegii (Oceanospirillum kriegii).